Reading from the N-terminus, the 222-residue chain is Phosphoglycolate phosphatase (222 aa).

Residue Asp8 is the Nucleophile of the active site. The Mg(2+) site is built by Asp8 and Asp10. Position 146 (Lys146) interacts with substrate. Positions 169 and 173 each coordinate Mg(2+).

The protein belongs to the archaeal SPP-like hydrolase family. Requires Mg(2+) as cofactor.

The enzyme catalyses 2-phosphoglycolate + H2O = glycolate + phosphate. Functionally, catalyzes the dephosphorylation of 2-phosphoglycolate. The chain is Phosphoglycolate phosphatase from Methanothrix thermoacetophila (strain DSM 6194 / JCM 14653 / NBRC 101360 / PT) (Methanosaeta thermophila).